A 546-amino-acid polypeptide reads, in one-letter code: Probable ATP-dependent RNA helicase DDX56 (546 aa).

Positions 7-35 (LGFEHMGLDPRLLQAVTDLGWSRPTLIQE) match the Q motif motif. Residues 38-218 (IPLALEGKDL…ELVLHNPVTL (181 aa)) form the Helicase ATP-binding domain. Residue 51-58 (ARTGSGKT) participates in ATP binding. Ser126 bears the Phosphoserine mark. Thr141 is modified (phosphothreonine). A DEAD box motif is present at residues 166–169 (DEAD). One can recognise a Helicase C-terminal domain in the interval 230-424 (QLQQFQVVCE…PYQFQMEEIE (195 aa)). Disordered stretches follow at residues 324 to 344 (VKGKRRGRGSKGNKASDPESG) and 508 to 546 (RKKRRKVPFSRKAKKVKAQNPLRDFKHRGKKPKPAAKPS). Basic residues-rich tracts occupy residues 325-334 (KGKRRGRGSK), 508-524 (RKKRRKVPFSRKAKKVK), and 532-546 (FKHRGKKPKPAAKPS).

Belongs to the DEAD box helicase family. DDX56/DBP9 subfamily. In terms of assembly, may form homooligomeric complexes. Interacts with IRF3. Interacts with OCT4 and POU5F1.

Its subcellular location is the nucleus. It is found in the nucleolus. It catalyses the reaction ATP + H2O = ADP + phosphate + H(+). In terms of biological role, nucleolar RNA helicase that plays a role in various biological processes including innate immunity, ribosome biogenesis or nucleolus organization. Plays an essential role in maintaining nucleolar integrity in planarian stem cells. Maintains embryonic stem cells proliferation by conventional regulation of ribosome assembly and interaction with OCT4 and POU5F1 complex. Regulates antiviral innate immunity by inhibiting the virus-triggered signaling nuclear translocation of IRF3. Mechanistically, acts by disrupting the interaction between IRF3 and importin IPO5. May play a role in later stages of the processing of the pre-ribosomal particles leading to mature 60S ribosomal subunits. Has intrinsic ATPase activity. In Mus musculus (Mouse), this protein is Probable ATP-dependent RNA helicase DDX56 (Ddx56).